The sequence spans 365 residues: MERLLQPSSSSSSISPSKFPSRTSPFLPRLRSSGLSFVSTHRPESRRVSSISCNSSQIPSLYTPIGSNTTNNSFNGSPKSDESKPNPGFLTRIATSASEQRKTLSTGTVILISAVAVLLLNPLLAPPAFASFQTAAKSGWLTSAWTGFLAGCLHTLSGPDHLAALAPLSIGRSKMESAAVGALWGCGHDAGQVIFGLLFLLLKDRLHIEVLQTWGTRIVGLTLVIIGAMGIKEASEIPEPCVALETDISMVSTEKEALPLPKKKKIGFATFATGVVHGLQPDALMIVLPALALPSRLAGSAFLIMFLVGTVIAMGSYTAFIGSCSEALKEKVPRITEKLTWVSSLVAIGLGLGIVISPFFGFSLY.

Disordered regions lie at residues 1-30 and 62-90; these read MERLLQPSSSSSSISPSKFPSRTSPFLPRL and YTPIGSNTTNNSFNGSPKSDESKPNPGFL. The N-terminal 79 residues, 1–79, are a transit peptide targeting the chloroplast; that stretch reads MERLLQPSSS…TNNSFNGSPK (79 aa). 2 stretches are compositionally biased toward low complexity: residues 7-24 and 62-77; these read PSSSSSSISPSKFPSRTS and YTPIGSNTTNNSFNGS. A run of 7 helical transmembrane segments spans residues 109 to 129, 139 to 159, 182 to 202, 218 to 238, 274 to 294, 301 to 321, and 345 to 365; these read VILISAVAVLLLNPLLAPPAF, GWLTSAWTGFLAGCLHTLSGP, ALWGCGHDAGQVIFGLLFLLL, IVGLTLVIIGAMGIKEASEIP, GVVHGLQPDALMIVLPALALP, AFLIMFLVGTVIAMGSYTAFI, and LVAIGLGLGIVISPFFGFSLY.

Mostly expressed in leaves and flowers, to a lower extent, in stems, roots, floral bud, inflorescence and siliques, and, barely, in seedlings.

The protein localises to the plastid. It is found in the chloroplast membrane. Its subcellular location is the plastid membrane. Its function is as follows. Together with CGF2, essential protein which supports female gametogenesis and embryogenesis, probably by securing local energy supply. This is Chloroplast protein FOR GROWTH AND FERTILITY 1 from Arabidopsis thaliana (Mouse-ear cress).